Consider the following 336-residue polypeptide: tRNA N6-adenosine threonylcarbamoyltransferase (336 aa).

H114 and H118 together coordinate Fe cation. Residues 136–140 (LVSGG), D169, G182, D186, and N275 each bind substrate. A Fe cation-binding site is contributed by D302.

This sequence belongs to the KAE1 / TsaD family. Fe(2+) is required as a cofactor.

The protein localises to the cytoplasm. The catalysed reaction is L-threonylcarbamoyladenylate + adenosine(37) in tRNA = N(6)-L-threonylcarbamoyladenosine(37) in tRNA + AMP + H(+). Required for the formation of a threonylcarbamoyl group on adenosine at position 37 (t(6)A37) in tRNAs that read codons beginning with adenine. Is involved in the transfer of the threonylcarbamoyl moiety of threonylcarbamoyl-AMP (TC-AMP) to the N6 group of A37, together with TsaE and TsaB. TsaD likely plays a direct catalytic role in this reaction. In Streptococcus agalactiae serotype III (strain NEM316), this protein is tRNA N6-adenosine threonylcarbamoyltransferase.